The primary structure comprises 462 residues: Cysteine--tRNA ligase (462 aa).

Cys-30 is a Zn(2+) binding site. Positions 32-42 (PTVYDRAHLGN) match the 'HIGH' region motif. 3 residues coordinate Zn(2+): Cys-221, His-246, and Glu-250. The 'KMSKS' region motif lies at 279–283 (KMSKS). Position 282 (Lys-282) interacts with ATP.

The protein belongs to the class-I aminoacyl-tRNA synthetase family. In terms of assembly, monomer. It depends on Zn(2+) as a cofactor.

The protein localises to the cytoplasm. The catalysed reaction is tRNA(Cys) + L-cysteine + ATP = L-cysteinyl-tRNA(Cys) + AMP + diphosphate. This Paracoccus denitrificans (strain Pd 1222) protein is Cysteine--tRNA ligase.